A 212-amino-acid polypeptide reads, in one-letter code: Thymidylate kinase (212 aa).

11–18 (GPEGAGKS) contributes to the ATP binding site.

This sequence belongs to the thymidylate kinase family.

It carries out the reaction dTMP + ATP = dTDP + ADP. In terms of biological role, phosphorylation of dTMP to form dTDP in both de novo and salvage pathways of dTTP synthesis. The sequence is that of Thymidylate kinase from Streptococcus sanguinis (strain SK36).